A 254-amino-acid polypeptide reads, in one-letter code: Nickel import ATP-binding protein NikD (254 aa).

The ABC transporter domain maps to 2-241 (PQQIELRNIA…PKHAVTRSLV (240 aa)). Residue 36 to 43 (GGSGSGKS) coordinates ATP.

The protein belongs to the ABC transporter superfamily. Nickel importer (TC 3.A.1.5.3) family. As to quaternary structure, the complex is composed of two ATP-binding proteins (NikD and NikE), two transmembrane proteins (NikB and NikC) and a solute-binding protein (NikA).

It is found in the cell inner membrane. The enzyme catalyses Ni(2+)(out) + ATP + H2O = Ni(2+)(in) + ADP + phosphate + H(+). Its function is as follows. Part of the ABC transporter complex NikABCDE involved in nickel import. Responsible for energy coupling to the transport system. The protein is Nickel import ATP-binding protein NikD of Shigella sonnei (strain Ss046).